A 450-amino-acid polypeptide reads, in one-letter code: MEIINSRYKMTDTVLGKGGFSEVFLGTDMYTDNKVAIKKINITGKNSSDIKFLNKLDFEIRTMQILNHPNIVAYYDVMKTENYWYIVMEYCNFGTLNDVIKFNKNKGISSLDLEKNTHYYLNQLRDALNYIINMGYIHRDIKPMNILLTKSISENNENNENTNYDRSNSLILKLADFGLTKKCSENEEDIMNTICGSPLYMAPELFFNQHYNSQSDIWSFGIIMYQLLFHDHPINATNYSQLKNGLKNQKINFPKNNMFSNYCFDLLSKTLAKDPKNRLNWSELFHHYWFIHWSEQHCPKNKSDDSNNKKIPDKSQFNEILSSTKSPLISLRQFGQLGQSNLSKFKNNGAINCSIDFPKYTNNFPSAVNQSIKIGLSGSSSPINIPVRNNSSKKINYDDIELISNGNIFPETLYGSISPVDSIINKETRNKTNNPSSLNLSEFVLSDYEI.

Residues 9–290 (KMTDTVLGKG…WSELFHHYWF (282 aa)) form the Protein kinase domain. Residues 15–23 (LGKGGFSEV) and Lys-38 each bind ATP. The active-site Proton acceptor is the Asp-140.

The protein belongs to the protein kinase superfamily. Ser/Thr protein kinase family.

It catalyses the reaction L-seryl-[protein] + ATP = O-phospho-L-seryl-[protein] + ADP + H(+). It carries out the reaction L-threonyl-[protein] + ATP = O-phospho-L-threonyl-[protein] + ADP + H(+). The polypeptide is Putative serine/threonine-protein kinase R517/R518 (Acanthamoeba polyphaga mimivirus (APMV)).